The chain runs to 104 residues: Large ribosomal subunit protein uL24 (104 aa).

It belongs to the universal ribosomal protein uL24 family. In terms of assembly, part of the 50S ribosomal subunit.

In terms of biological role, one of two assembly initiator proteins, it binds directly to the 5'-end of the 23S rRNA, where it nucleates assembly of the 50S subunit. Its function is as follows. One of the proteins that surrounds the polypeptide exit tunnel on the outside of the subunit. This is Large ribosomal subunit protein uL24 from Maricaulis maris (strain MCS10) (Caulobacter maris).